Here is a 2282-residue protein sequence, read N- to C-terminus: Acetyl-CoA carboxylase (2282 aa).

Residues 16–515 (NIEKILIANN…HTGWLDQLIS (500 aa)) form the Biotin carboxylation domain. An ATP-grasp domain is found at 170-360 (YSECNGVPSE…LPATQLQIAM (191 aa)). 196–253 (AQRVGFPAMIKASEGGGGKGIRKVTSMEDLESSFRQVQNEVPGSPIFFMKLVSNARHL) provides a ligand contact to ATP. Mn(2+) contacts are provided by Glu-319, Glu-331, and Asn-333. Arg-335 is an active-site residue. The Biotinyl-binding domain maps to 646–720 (FSQEYDPSIL…APGAIIANLE (75 aa)). N6-biotinyllysine is present on Lys-687. The segment covering 1109–1129 (GSNSGSPTYGSPLIRSISSSG) has biased composition (low complexity). Positions 1109 to 1141 (GSNSGSPTYGSPLIRSISSSGGSSGGSGFQISP) are disordered. Residues 1495–1851 (PYPIMDAVQR…SGGEMVPIIS (357 aa)) enclose the CoA carboxyltransferase N-terminal domain. The interval 1495–2178 (PYPIMDAVQR…EEDKLKLIDK (684 aa)) is carboxyltransferase. Residues Arg-1761, Lys-2068, and Arg-2070 each contribute to the CoA site. A CoA carboxyltransferase C-terminal domain is found at 1852 to 2178 (PIDSPHRDIE…EEDKLKLIDK (327 aa)).

The cofactor is biotin. Mn(2+) serves as cofactor.

Its subcellular location is the cytoplasm. It catalyses the reaction hydrogencarbonate + acetyl-CoA + ATP = malonyl-CoA + ADP + phosphate + H(+). The catalysed reaction is N(6)-biotinyl-L-lysyl-[protein] + hydrogencarbonate + ATP = N(6)-carboxybiotinyl-L-lysyl-[protein] + ADP + phosphate + H(+). It participates in lipid metabolism; malonyl-CoA biosynthesis; malonyl-CoA from acetyl-CoA: step 1/1. In terms of biological role, catalyzes the rate-limiting reaction in the biogenesis of long-chain fatty acids. Carries out three functions: biotin carboxyl carrier protein, biotin carboxylase and carboxyltransferase. In Dictyostelium discoideum (Social amoeba), this protein is Acetyl-CoA carboxylase (accA).